The sequence spans 274 residues: Penicillin-insensitive murein endopeptidase (274 aa).

The signal sequence occupies residues 1-19 (MNKTAIALLALLASSASLA). Intrachain disulfides connect cysteine 44–cysteine 265, cysteine 187–cysteine 235, and cysteine 216–cysteine 223. 6 residues coordinate Zn(2+): histidine 110, histidine 113, aspartate 120, aspartate 147, histidine 150, and histidine 211. A disordered region spans residues 228-265 (LPPPGDGCGAELQSWFAPPKPGTTKPEKKTPPPLPPSC).

Belongs to the peptidase M74 family. In terms of assembly, dimer. The cofactor is Zn(2+).

The protein localises to the periplasm. In terms of biological role, murein endopeptidase that cleaves the D-alanyl-meso-2,6-diamino-pimelyl amide bond that connects peptidoglycan strands. Likely plays a role in the removal of murein from the sacculus. The protein is Penicillin-insensitive murein endopeptidase of Shigella boydii serotype 18 (strain CDC 3083-94 / BS512).